The primary structure comprises 323 residues: Pantothenate kinase (323 aa).

101–108 contacts ATP; that stretch reads GSVAVGKS.

It belongs to the prokaryotic pantothenate kinase family.

Its subcellular location is the cytoplasm. It carries out the reaction (R)-pantothenate + ATP = (R)-4'-phosphopantothenate + ADP + H(+). It participates in cofactor biosynthesis; coenzyme A biosynthesis; CoA from (R)-pantothenate: step 1/5. The polypeptide is Pantothenate kinase (Xanthobacter autotrophicus (strain ATCC BAA-1158 / Py2)).